The sequence spans 334 residues: Phosphate acyltransferase (334 aa).

This sequence belongs to the PlsX family. As to quaternary structure, homodimer. Probably interacts with PlsY.

Its subcellular location is the cytoplasm. The catalysed reaction is a fatty acyl-[ACP] + phosphate = an acyl phosphate + holo-[ACP]. Its pathway is lipid metabolism; phospholipid metabolism. Functionally, catalyzes the reversible formation of acyl-phosphate (acyl-PO(4)) from acyl-[acyl-carrier-protein] (acyl-ACP). This enzyme utilizes acyl-ACP as fatty acyl donor, but not acyl-CoA. The protein is Phosphate acyltransferase of Thermotoga petrophila (strain ATCC BAA-488 / DSM 13995 / JCM 10881 / RKU-1).